A 215-amino-acid polypeptide reads, in one-letter code: Probable phosphoglycerate mutase GpmB (215 aa).

Residues 8–15 (RHGETEWN), 21–22 (QG), R58, 82–85 (ELDM), and 151–152 (GI) each bind substrate. Catalysis depends on H9, which acts as the Tele-phosphohistidine intermediate. E82 serves as the catalytic Proton donor/acceptor.

It belongs to the phosphoglycerate mutase family. GpmB subfamily.

The catalysed reaction is (2R)-2-phosphoglycerate = (2R)-3-phosphoglycerate. It functions in the pathway carbohydrate degradation; glycolysis; pyruvate from D-glyceraldehyde 3-phosphate: step 3/5. The sequence is that of Probable phosphoglycerate mutase GpmB from Proteus mirabilis (strain HI4320).